Reading from the N-terminus, the 239-residue chain is Fatty acid metabolism regulator protein (239 aa).

The region spanning 6–74 (QSPAGFAEEY…HGKPTKVNNF (69 aa)) is the HTH gntR-type domain. Positions 34–53 (ERELSELIGVTRTTLREVLQ) form a DNA-binding region, H-T-H motif.

In terms of assembly, homodimer.

Its subcellular location is the cytoplasm. Functionally, multifunctional regulator of fatty acid metabolism. This is Fatty acid metabolism regulator protein from Klebsiella pneumoniae subsp. pneumoniae (strain ATCC 700721 / MGH 78578).